Consider the following 272-residue polypeptide: Heat stress transcription factor A-7a (272 aa).

Residues 1-26 form a disordered region; that stretch reads MMNPFLPEGCDPPPPPQPMEGLHENA. A DNA-binding region spans residues 27 to 121; it reads PPPFLTKTFE…LLKNIKRRNP (95 aa). Residues 132-186 are hydrophobic repeat HR-A/B; sequence ACNELRREKQVLMMEIVSLRQQQQTTKSYIKAMEQRIEGTERKQRQMMSFLARAM. The Bipartite nuclear localization signal motif lies at 201–216; that stretch reads KKIKELEDNESAKRKR. Positions 203–212 are enriched in basic and acidic residues; sequence IKELEDNESA. The interval 203–223 is disordered; it reads IKELEDNESAKRKRGSSSMSE. An AHA motif is present at residues 256–265; the sequence is DGFWEELLSD.

This sequence belongs to the HSF family. Class A subfamily. Homotrimer. Post-translationally, exhibits temperature-dependent phosphorylation.

The protein resides in the nucleus. Its function is as follows. Transcriptional activator that specifically binds DNA sequence 5'-AGAAnnTTCT-3' known as heat shock promoter elements (HSE). This Arabidopsis thaliana (Mouse-ear cress) protein is Heat stress transcription factor A-7a (HSFA7A).